The sequence spans 564 residues: Adenine deaminase (564 aa).

The protein belongs to the metallo-dependent hydrolases superfamily. Adenine deaminase family. It depends on Mn(2+) as a cofactor.

It carries out the reaction adenine + H2O + H(+) = hypoxanthine + NH4(+). The polypeptide is Adenine deaminase (Deinococcus geothermalis (strain DSM 11300 / CIP 105573 / AG-3a)).